Reading from the N-terminus, the 170-residue chain is Photosystem I assembly protein Ycf3 (170 aa).

TPR repeat units lie at residues Ala35–Ala68, Ser72–Leu105, and Gly120–Asn153.

This sequence belongs to the Ycf3 family.

It localises to the plastid. The protein resides in the chloroplast thylakoid membrane. Essential for the assembly of the photosystem I (PSI) complex. May act as a chaperone-like factor to guide the assembly of the PSI subunits. This chain is Photosystem I assembly protein Ycf3, found in Tetradesmus obliquus (Green alga).